A 172-amino-acid chain; its full sequence is Large ribosomal subunit protein uL10 (172 aa).

It belongs to the universal ribosomal protein uL10 family. As to quaternary structure, part of the ribosomal stalk of the 50S ribosomal subunit. The N-terminus interacts with L11 and the large rRNA to form the base of the stalk. The C-terminus forms an elongated spine to which L12 dimers bind in a sequential fashion forming a multimeric L10(L12)X complex.

In terms of biological role, forms part of the ribosomal stalk, playing a central role in the interaction of the ribosome with GTP-bound translation factors. The polypeptide is Large ribosomal subunit protein uL10 (Francisella tularensis subsp. tularensis (strain FSC 198)).